The chain runs to 524 residues: Nuclear distribution protein PAC1 (524 aa).

Positions S65–G90 form a coiled coil. WD repeat units lie at residues Q121 to P160, A166 to T217, G220 to T262, N277 to L317, I353 to H394, G415 to S454, G463 to E492, and E493 to S524.

This sequence belongs to the WD repeat LIS1/nudF family. As to quaternary structure, self-associates. Interacts with NDL1 and dynein.

It localises to the cytoplasm. The protein localises to the cytoskeleton. It is found in the spindle pole. Functionally, positively regulates the activity of the minus-end directed microtubule motor protein dynein. Plays a central role in positioning the mitotic spindle at the bud neck during cell division. Targets cytoplasmic dynein to microtubule plus ends, thereby promoting dynein-mediated microtubule sliding along the bud cortex and consequently the movement of the mitotic spindle to the bud neck. The polypeptide is Nuclear distribution protein PAC1 (Scheffersomyces stipitis (strain ATCC 58785 / CBS 6054 / NBRC 10063 / NRRL Y-11545) (Yeast)).